The sequence spans 143 residues: MAPKKKVTGLIKLQIKAGAANPAPPIGPALGQHGVNIMEFCKAYNAQTEAQRGNVIPVEITVYEDRTFTFILKTPPAAELIKKAAGVAKGSGTPHTVKVAKLTMDQVREIAEQKQADLNANDIDAAAKIIAGTARSMGITVEA.

It belongs to the universal ribosomal protein uL11 family. Part of the ribosomal stalk of the 50S ribosomal subunit. Interacts with L10 and the large rRNA to form the base of the stalk. L10 forms an elongated spine to which L12 dimers bind in a sequential fashion forming a multimeric L10(L12)X complex. In terms of processing, one or more lysine residues are methylated.

Forms part of the ribosomal stalk which helps the ribosome interact with GTP-bound translation factors. This is Large ribosomal subunit protein uL11 from Clavibacter michiganensis subsp. michiganensis (strain NCPPB 382).